We begin with the raw amino-acid sequence, 265 residues long: Type III pantothenate kinase (265 aa).

6–13 contributes to the ATP binding site; it reads DVGNTHTV. 112–115 is a binding site for substrate; the sequence is GADR. Residue D114 is the Proton acceptor of the active site. K(+) is bound at residue D134. T137 serves as a coordination point for ATP. T189 provides a ligand contact to substrate.

This sequence belongs to the type III pantothenate kinase family. In terms of assembly, homodimer. Requires NH4(+) as cofactor. K(+) serves as cofactor.

It is found in the cytoplasm. It catalyses the reaction (R)-pantothenate + ATP = (R)-4'-phosphopantothenate + ADP + H(+). The protein operates within cofactor biosynthesis; coenzyme A biosynthesis; CoA from (R)-pantothenate: step 1/5. In terms of biological role, catalyzes the phosphorylation of pantothenate (Pan), the first step in CoA biosynthesis. The polypeptide is Type III pantothenate kinase (Streptomyces avermitilis (strain ATCC 31267 / DSM 46492 / JCM 5070 / NBRC 14893 / NCIMB 12804 / NRRL 8165 / MA-4680)).